The following is a 143-amino-acid chain: Flagellar assembly factor FliW (143 aa).

The protein belongs to the FliW family. In terms of assembly, interacts with translational regulator CsrA and flagellin(s).

It localises to the cytoplasm. Its function is as follows. Acts as an anti-CsrA protein, binds CsrA and prevents it from repressing translation of its target genes, one of which is flagellin. Binds to flagellin and participates in the assembly of the flagellum. The polypeptide is Flagellar assembly factor FliW (Clostridium novyi (strain NT)).